The sequence spans 150 residues: Phosphoribosyl-AMP cyclohydrolase (150 aa).

Asp-92 serves as a coordination point for Mg(2+). Cys-93 contributes to the Zn(2+) binding site. Mg(2+)-binding residues include Asp-94 and Asp-96. 2 residues coordinate Zn(2+): Cys-111 and Cys-118.

This sequence belongs to the PRA-CH family. As to quaternary structure, homodimer. Mg(2+) is required as a cofactor. Zn(2+) serves as cofactor.

It is found in the cytoplasm. The catalysed reaction is 1-(5-phospho-beta-D-ribosyl)-5'-AMP + H2O = 1-(5-phospho-beta-D-ribosyl)-5-[(5-phospho-beta-D-ribosylamino)methylideneamino]imidazole-4-carboxamide. The protein operates within amino-acid biosynthesis; L-histidine biosynthesis; L-histidine from 5-phospho-alpha-D-ribose 1-diphosphate: step 3/9. Its function is as follows. Catalyzes the hydrolysis of the adenine ring of phosphoribosyl-AMP. The sequence is that of Phosphoribosyl-AMP cyclohydrolase from Agrobacterium fabrum (strain C58 / ATCC 33970) (Agrobacterium tumefaciens (strain C58)).